The sequence spans 328 residues: Nickel import system permease protein NikB (328 aa).

The next 6 helical transmembrane spans lie at 11–31 (LMQMIVVLFVISTLTFILMKL), 104–124 (LLISFSTLVVSLCISIPLGII), 139–159 (VISTLSISLPAFFIGIILLFI), 170–190 (ILSQFILPVITLSLGMCAYII), 229–249 (ILPIIPLLGISLGSLIGGTVV), and 279–299 (VLFIGFFVVIINTIADLLTLL). Residues 100–297 (APITLLISFS…IINTIADLLT (198 aa)) form the ABC transmembrane type-1 domain.

Belongs to the binding-protein-dependent transport system permease family. OppBC subfamily. The complex is composed of two ATP-binding proteins (NikD and NikE), two transmembrane proteins (NikB and NikC) and a solute-binding protein (NikA).

It localises to the cell membrane. Its function is as follows. Part of the ABC transporter complex NikABCDE (Opp2) involved in nickel import. Probably responsible for the translocation of the substrate across the membrane. This Staphylococcus aureus (strain MSSA476) protein is Nickel import system permease protein NikB.